Consider the following 564-residue polypeptide: Homeobox protein unc-62 (564 aa).

Disordered stretches follow at residues 40–59 (NEQF…ADPA), 216–270 (ERAS…VMGG), 293–313 (SSSS…LHST), 328–397 (PSTC…KVPK), and 455–503 (IDQN…PSSL). The region spanning 133–218 (SSDVCSSASF…PLDIVGDERA (86 aa)) is the MEIS N-terminal domain. A compositionally biased stretch (low complexity) spans 219 to 230 (SSSQPPMSPGSM). 2 stretches are compositionally biased toward polar residues: residues 328–344 (PSTC…TPLS) and 381–390 (LSDSANGSQN). The homeobox; TALE-type DNA-binding region spans 392 to 454 (KRKVPKVFSK…NARRRIVQPM (63 aa)). Polar residues-rich tracts occupy residues 455–469 (IDQN…QMNV) and 494–503 (ANYSPDPSSL).

This sequence belongs to the TALE/MEIS homeobox family. In terms of assembly, forms a heterodimer with homeobox ceh-60.

The protein resides in the nucleus. In terms of biological role, acts redundantly with ceh-20 and ceh-40 to perform overlapping roles during embryogenesis. Required for postembryonic development of the ectoderm, including the Q, V and P cell lineages, playing a crucial role in ensuring that these cells and their descendants undergo their invariant patterns of cell division, migration, fusion and morphogenesis. Has a role in the mig-13 pathway to promote anterior migration of neuroblasts in the Q lineage. Required for multiple roles in regulating vulva development. Associates with homeobox ceh-60 to regulate gene expression, including repression of genes involved in innate immunity and activation of genes involved in vitellogenesis. Involved in lipid homeostasis, contributing to the formation of the cuticle. This Caenorhabditis elegans protein is Homeobox protein unc-62 (unc-62).